We begin with the raw amino-acid sequence, 209 residues long: NAD-reducing hydrogenase HoxS subunit delta (209 aa).

In terms of assembly, tetramer of an alpha and a gamma subunits (flavin-containing dimer), and a delta and a nickel-containing beta subunits (hydrogenase dimer). [4Fe-4S] cluster is required as a cofactor. It depends on [3Fe-4S] cluster as a cofactor. The cofactor is [2Fe-2S] cluster. Requires FMN as cofactor. Ni(2+) serves as cofactor.

It localises to the cytoplasm. It catalyses the reaction H2 + NAD(+) = NADH + H(+). The protein is NAD-reducing hydrogenase HoxS subunit delta (hoxY) of Cupriavidus necator (strain ATCC 17699 / DSM 428 / KCTC 22496 / NCIMB 10442 / H16 / Stanier 337) (Ralstonia eutropha).